Consider the following 286-residue polypeptide: Polyamine aminopropyltransferase (286 aa).

Residues 1 to 235 (MSDYQETLYE…GAMTFAWGAT (235 aa)) form the PABS domain. Residue Gln30 coordinates S-methyl-5'-thioadenosine. Spermidine-binding residues include His61 and Asp85. Residues Glu105 and 137–138 (DG) each bind S-methyl-5'-thioadenosine. Catalysis depends on Asp155, which acts as the Proton acceptor. 155–158 (DSTD) contributes to the spermidine binding site. Pro162 serves as a coordination point for S-methyl-5'-thioadenosine.

The protein belongs to the spermidine/spermine synthase family. As to quaternary structure, homodimer or homotetramer.

It localises to the cytoplasm. It carries out the reaction S-adenosyl 3-(methylsulfanyl)propylamine + putrescine = S-methyl-5'-thioadenosine + spermidine + H(+). The protein operates within amine and polyamine biosynthesis; spermidine biosynthesis; spermidine from putrescine: step 1/1. Its function is as follows. Catalyzes the irreversible transfer of a propylamine group from the amino donor S-adenosylmethioninamine (decarboxy-AdoMet) to putrescine (1,4-diaminobutane) to yield spermidine. The chain is Polyamine aminopropyltransferase from Pseudomonas syringae pv. tomato (strain ATCC BAA-871 / DC3000).